A 353-amino-acid chain; its full sequence is Glutamine synthetase nodule isozyme (353 aa).

The region spanning 19–99 (IIAEYIWVGG…VMCDTYTPAG (81 aa)) is the GS beta-grasp domain. The GS catalytic domain maps to 106–353 (KRHAAAKIFS…TSMIAETTLL (248 aa)).

It belongs to the glutamine synthetase family. Homooctamer.

It localises to the cytoplasm. It catalyses the reaction L-glutamate + NH4(+) + ATP = L-glutamine + ADP + phosphate + H(+). The polypeptide is Glutamine synthetase nodule isozyme (Lupinus luteus (European yellow lupine)).